The following is a 246-amino-acid chain: E3 ubiquitin-protein ligase RNF182 (246 aa).

The RING-type zinc finger occupies 22 to 70 (CKICYNRYNLRQRKPKVLGCCHRVCAKCLYKLVDCGESPQCVIVCPFCR). 2 consecutive transmembrane segments (helical) span residues 184 to 204 (VFVWLLGLLYFSSLPLGIYLL) and 211 to 231 (LGVVFVSLVPSSLVILMIYGF).

As to quaternary structure, interacts with ATP6V0C.

It localises to the membrane. Its subcellular location is the cytoplasm. The enzyme catalyses S-ubiquitinyl-[E2 ubiquitin-conjugating enzyme]-L-cysteine + [acceptor protein]-L-lysine = [E2 ubiquitin-conjugating enzyme]-L-cysteine + N(6)-ubiquitinyl-[acceptor protein]-L-lysine.. It functions in the pathway protein modification; protein ubiquitination. Its function is as follows. E3 ubiquitin-protein ligase that mediates the ubiquitination of atp6v0c and targets it to degradation via the ubiquitin-proteasome pathway. This Xenopus laevis (African clawed frog) protein is E3 ubiquitin-protein ligase RNF182 (rnf182).